A 912-amino-acid chain; its full sequence is Translation initiation factor IF-2 (912 aa).

The disordered stretch occupies residues 26–297 (SDQGEFVKSA…RGRKSKRAKR (272 aa)). Over residues 56 to 74 (KPAPAASNGAAAEAAAPPK) the composition is skewed to low complexity. The segment covering 100 to 120 (APEPPAAPAAPAAPAPKPSPA) has biased composition (pro residues). Residues 121–131 (ARPAAAEAAAP) show a composition bias toward low complexity. 3 stretches are compositionally biased toward pro residues: residues 132 to 152 (APAPAPAPRPGATPGPKPGAP), 173 to 183 (PRPQAPRPGAP), and 192 to 218 (NMPPRPSPGSMGPRPPRPGGGPRPGGG). The span at 219-283 (PRPGGAGRPG…GAAGAFGRPG (65 aa)) shows a compositional bias: gly residues. A compositionally biased stretch (basic residues) spans 287 to 296 (KRGRKSKRAK). In terms of domain architecture, tr-type G spans 408–579 (TRPPVVTVMG…AVLLTADAAL (172 aa)). The interval 417–424 (GHVDHGKT) is G1. Position 417-424 (417-424 (GHVDHGKT)) interacts with GTP. The segment at 442-446 (GITQH) is G2. The segment at 467–470 (DTPG) is G3. GTP-binding positions include 467-471 (DTPGH) and 521-524 (NKID). Residues 521–524 (NKID) form a G4 region. Residues 557–559 (SAR) form a G5 region.

The protein belongs to the TRAFAC class translation factor GTPase superfamily. Classic translation factor GTPase family. IF-2 subfamily.

Its subcellular location is the cytoplasm. Its function is as follows. One of the essential components for the initiation of protein synthesis. Protects formylmethionyl-tRNA from spontaneous hydrolysis and promotes its binding to the 30S ribosomal subunits. Also involved in the hydrolysis of GTP during the formation of the 70S ribosomal complex. In Mycobacteroides abscessus (strain ATCC 19977 / DSM 44196 / CCUG 20993 / CIP 104536 / JCM 13569 / NCTC 13031 / TMC 1543 / L948) (Mycobacterium abscessus), this protein is Translation initiation factor IF-2.